Reading from the N-terminus, the 108-residue chain is Thiosulfate sulfurtransferase GlpE (108 aa).

One can recognise a Rhodanese domain in the interval Gln18–Leu106. The active-site Cysteine persulfide intermediate is Cys66.

The protein belongs to the GlpE family.

The protein resides in the cytoplasm. The enzyme catalyses thiosulfate + hydrogen cyanide = thiocyanate + sulfite + 2 H(+). It carries out the reaction thiosulfate + [thioredoxin]-dithiol = [thioredoxin]-disulfide + hydrogen sulfide + sulfite + 2 H(+). Transferase that catalyzes the transfer of sulfur from thiosulfate to thiophilic acceptors such as cyanide or dithiols. May function in a CysM-independent thiosulfate assimilation pathway by catalyzing the conversion of thiosulfate to sulfite, which can then be used for L-cysteine biosynthesis. The sequence is that of Thiosulfate sulfurtransferase GlpE from Glaesserella parasuis serovar 5 (strain SH0165) (Haemophilus parasuis).